The following is a 61-amino-acid chain: Translational regulator CsrA (61 aa).

The protein belongs to the CsrA/RsmA family. Homodimer; the beta-strands of each monomer intercalate to form a hydrophobic core, while the alpha-helices form wings that extend away from the core.

The protein resides in the cytoplasm. A key translational regulator that binds mRNA to regulate translation initiation and/or mRNA stability. Mediates global changes in gene expression, shifting from rapid growth to stress survival by linking envelope stress, the stringent response and the catabolite repression systems. Usually binds in the 5'-UTR; binding at or near the Shine-Dalgarno sequence prevents ribosome-binding, repressing translation, binding elsewhere in the 5'-UTR can activate translation and/or stabilize the mRNA. Its function is antagonized by small RNA(s). This is Translational regulator CsrA from Glaesserella parasuis serovar 5 (strain SH0165) (Haemophilus parasuis).